Reading from the N-terminus, the 129-residue chain is Glycine cleavage system H protein (129 aa).

A Lipoyl-binding domain is found at 23 to 104; the sequence is SVTVGITHHA…AYTAWLFKIK (82 aa). Lysine 64 is modified (N6-lipoyllysine).

It belongs to the GcvH family. In terms of assembly, the glycine cleavage system is composed of four proteins: P, T, L and H. (R)-lipoate serves as cofactor.

Functionally, the glycine cleavage system catalyzes the degradation of glycine. The H protein shuttles the methylamine group of glycine from the P protein to the T protein. The protein is Glycine cleavage system H protein of Thiobacillus denitrificans (strain ATCC 25259 / T1).